The chain runs to 880 residues: Alanine--tRNA ligase (880 aa).

Residues histidine 567, histidine 571, cysteine 669, and histidine 673 each contribute to the Zn(2+) site.

This sequence belongs to the class-II aminoacyl-tRNA synthetase family. Zn(2+) is required as a cofactor.

It is found in the cytoplasm. The catalysed reaction is tRNA(Ala) + L-alanine + ATP = L-alanyl-tRNA(Ala) + AMP + diphosphate. Its function is as follows. Catalyzes the attachment of alanine to tRNA(Ala) in a two-step reaction: alanine is first activated by ATP to form Ala-AMP and then transferred to the acceptor end of tRNA(Ala). Also edits incorrectly charged Ser-tRNA(Ala) and Gly-tRNA(Ala) via its editing domain. The polypeptide is Alanine--tRNA ligase (Bacillus cytotoxicus (strain DSM 22905 / CIP 110041 / 391-98 / NVH 391-98)).